The chain runs to 619 residues: Protein CPn_1016/CP_0837/CPj1016/CpB1054 (619 aa).

The segment at 591-619 (NAKKSEEQTSPQETPEVIRVSYPTTTSAL) is disordered.

This sequence belongs to the chlamydial CPn_1016/CT_858/TC_0248 family.

The protein is Protein CPn_1016/CP_0837/CPj1016/CpB1054 of Chlamydia pneumoniae (Chlamydophila pneumoniae).